The following is a 156-amino-acid chain: Small ribosomal subunit protein uS7c (156 aa).

The protein belongs to the universal ribosomal protein uS7 family. In terms of assembly, part of the 30S ribosomal subunit.

It is found in the plastid. The protein localises to the chloroplast. Functionally, one of the primary rRNA binding proteins, it binds directly to 16S rRNA where it nucleates assembly of the head domain of the 30S subunit. This is Small ribosomal subunit protein uS7c (rps7) from Rhodomonas salina (Cryptomonas salina).